The chain runs to 224 residues: MARYFILAVALLLTACSSTSKKPIADDPFYAPVYPEAPPTKIAATGSIYQDSQAASLYSDIRAHKVGDIITIVLKEATQAKKSAGNQIKKGSDMSLDPIYAGGSNVSIGGVPLDLRYKDSMNTKRESDADQSNSLDGSISANVMQVLNNGNLVVRGEKWISINNGDEFIRVTGIVRSQDIKPDNTIDSTRMANARIQYSGTGTFADAQKVGWLSQFFMSDWWPF.

Positions 1–15 are cleaved as a signal peptide; that stretch reads MARYFILAVALLLTA. The N-palmitoyl cysteine moiety is linked to residue C16. C16 is lipidated: S-diacylglycerol cysteine.

Belongs to the FlgH family. As to quaternary structure, the basal body constitutes a major portion of the flagellar organelle and consists of four rings (L,P,S, and M) mounted on a central rod.

The protein resides in the cell outer membrane. It is found in the bacterial flagellum basal body. In terms of biological role, assembles around the rod to form the L-ring and probably protects the motor/basal body from shearing forces during rotation. The polypeptide is Flagellar L-ring protein (Shewanella sp. (strain MR-7)).